Consider the following 1880-residue polypeptide: Nonribosomal peptide synthetase otaB (1880 aa).

The interval 205-594 is adenylation 1; the sequence is AQAVERGNSI…SVSFVGRRQA (390 aa). Positions 728–804 constitute a Carrier domain; the sequence is LPLSPLERQI…ELGAHLEQEA (77 aa). An O-(pantetheine 4'-phosphoryl)serine modification is found at Ser765. The condensation stretch occupies residues 840-1250; that stretch reads EDVYPCTALQ…LLSPQDQQQL (411 aa). The segment at 1269-1665 is adenylation 2; sequence QRQCLAHPQK…GRKDRQVKLR (397 aa).

It belongs to the NRP synthetase family.

It catalyses the reaction 7-carboxymellein + L-phenylalanine + ATP = ochratoxin B + ADP + phosphate + H(+). It participates in mycotoxin biosynthesis. Functionally, nonribosomal peptide synthetase; part of the gene cluster that mediates the biosynthesis of ochratoxin A (OTA), a mycotoxin composed of a chlorinated type I polyketide dihydroisocoumarin moiety linked to L-phenylalanine, and demonstrated to have nephrotoxic, immunotoxic, genotoxic, neurotoxic, and teratogenic properties. OtaB is responsible for the linking of phenylalanine to the dihydroisocoumarin ring. The pathway begins with the highly reducing polyketide synthase otaA that catalyzes the formation of the isocoumarin group during the initial stages of biosynthesis, starting from one acetate and 4 malonate units, to originate the characteristic pentaketide skeleton 7-methylmellein (7-MM) of the OTA molecule. The newly identified cyclase otaY might be involved in the polyketide cyclization reaction during the initial steps of the OTA biosynthesis. 7-MM is then oxidized into 7-carboxymellein (also called ochratoxin beta) by the cytochrome P450 monooxygenase otaC. The NRPS encoded by the otaB gene is involved in the linking of phenylalanine to the dihydroisocoumarin ring. The reaction catalyzed by NRPS results in the production of ochratoxin B (OTB), which is the non-chlorinated analog of OTA and which subsequently serves as the substrate of the halogenase otaD for chlorination activity to form the final molecular structure of OTA, containing a chlorine atom in the C-5 position of the molecule. The sequence is that of Nonribosomal peptide synthetase otaB from Aspergillus niger (strain ATCC MYA-4892 / CBS 513.88 / FGSC A1513).